We begin with the raw amino-acid sequence, 417 residues long: NADH-quinone oxidoreductase subunit D (417 aa).

The protein belongs to the complex I 49 kDa subunit family. As to quaternary structure, NDH-1 is composed of 14 different subunits. Subunits NuoB, C, D, E, F, and G constitute the peripheral sector of the complex.

It is found in the cell inner membrane. The catalysed reaction is a quinone + NADH + 5 H(+)(in) = a quinol + NAD(+) + 4 H(+)(out). Its function is as follows. NDH-1 shuttles electrons from NADH, via FMN and iron-sulfur (Fe-S) centers, to quinones in the respiratory chain. The immediate electron acceptor for the enzyme in this species is believed to be ubiquinone. Couples the redox reaction to proton translocation (for every two electrons transferred, four hydrogen ions are translocated across the cytoplasmic membrane), and thus conserves the redox energy in a proton gradient. The protein is NADH-quinone oxidoreductase subunit D of Methylobacillus flagellatus (strain ATCC 51484 / DSM 6875 / VKM B-1610 / KT).